A 328-amino-acid polypeptide reads, in one-letter code: Beta-ketoacyl-[acyl-carrier-protein] synthase III (328 aa).

Catalysis depends on residues cysteine 122 and histidine 255. An ACP-binding region spans residues 256–260; that stretch reads QANIR. Residue asparagine 285 is part of the active site.

Belongs to the thiolase-like superfamily. FabH family. Homodimer.

It localises to the cytoplasm. The catalysed reaction is malonyl-[ACP] + acetyl-CoA + H(+) = 3-oxobutanoyl-[ACP] + CO2 + CoA. It participates in lipid metabolism; fatty acid biosynthesis. Functionally, catalyzes the condensation reaction of fatty acid synthesis by the addition to an acyl acceptor of two carbons from malonyl-ACP. Catalyzes the first condensation reaction which initiates fatty acid synthesis and may therefore play a role in governing the total rate of fatty acid production. Possesses both acetoacetyl-ACP synthase and acetyl transacylase activities. Its substrate specificity determines the biosynthesis of branched-chain and/or straight-chain of fatty acids. In Polynucleobacter necessarius subsp. necessarius (strain STIR1), this protein is Beta-ketoacyl-[acyl-carrier-protein] synthase III.